A 61-amino-acid polypeptide reads, in one-letter code: Small ribosomal subunit protein uS14B (61 aa).

Residues cysteine 24, cysteine 27, cysteine 40, and cysteine 43 each coordinate Zn(2+).

Belongs to the universal ribosomal protein uS14 family. Zinc-binding uS14 subfamily. In terms of assembly, part of the 30S ribosomal subunit. Contacts proteins S3 and S10. Requires Zn(2+) as cofactor.

Functionally, binds 16S rRNA, required for the assembly of 30S particles and may also be responsible for determining the conformation of the 16S rRNA at the A site. The sequence is that of Small ribosomal subunit protein uS14B from Ligilactobacillus salivarius (strain UCC118) (Lactobacillus salivarius).